Consider the following 330-residue polypeptide: NADH-quinone oxidoreductase subunit H (330 aa).

The next 8 membrane-spanning stretches (helical) occupy residues 5 to 25 (LLTL…VLTL), 78 to 98 (WVFM…FAVI), 120 to 140 (IGLL…ALGG), 155 to 175 (AMAQ…PVVM), 191 to 211 (SLPN…AIMA), 243 to 263 (FFVG…VLFL), 271 to 291 (LPGI…FIWV), and 308 to 328 (WKIL…WLIW).

This sequence belongs to the complex I subunit 1 family. NDH-1 is composed of 14 different subunits. Subunits NuoA, H, J, K, L, M, N constitute the membrane sector of the complex.

The protein resides in the cell inner membrane. It catalyses the reaction a quinone + NADH + 5 H(+)(in) = a quinol + NAD(+) + 4 H(+)(out). NDH-1 shuttles electrons from NADH, via FMN and iron-sulfur (Fe-S) centers, to quinones in the respiratory chain. The immediate electron acceptor for the enzyme in this species is believed to be ubiquinone. Couples the redox reaction to proton translocation (for every two electrons transferred, four hydrogen ions are translocated across the cytoplasmic membrane), and thus conserves the redox energy in a proton gradient. This subunit may bind ubiquinone. The polypeptide is NADH-quinone oxidoreductase subunit H (Syntrophotalea carbinolica (strain DSM 2380 / NBRC 103641 / GraBd1) (Pelobacter carbinolicus)).